We begin with the raw amino-acid sequence, 240 residues long: Demethylmenaquinone methyltransferase (240 aa).

Residues Thr62, Asp80, 102–103 (DA), and Ser119 contribute to the S-adenosyl-L-methionine site.

It belongs to the class I-like SAM-binding methyltransferase superfamily. MenG/UbiE family.

The enzyme catalyses a 2-demethylmenaquinol + S-adenosyl-L-methionine = a menaquinol + S-adenosyl-L-homocysteine + H(+). It functions in the pathway quinol/quinone metabolism; menaquinone biosynthesis; menaquinol from 1,4-dihydroxy-2-naphthoate: step 2/2. Methyltransferase required for the conversion of demethylmenaquinol (DMKH2) to menaquinol (MKH2). In Beutenbergia cavernae (strain ATCC BAA-8 / DSM 12333 / CCUG 43141 / JCM 11478 / NBRC 16432 / NCIMB 13614 / HKI 0122), this protein is Demethylmenaquinone methyltransferase.